The following is a 523-amino-acid chain: 2-isopropylmalate synthase (523 aa).

A Pyruvate carboxyltransferase domain is found at 5–267 (VIIFDTTLRD…ETGINAKEIH (263 aa)). Residues Asp-14, His-202, His-204, and Asn-238 each coordinate Mn(2+). Residues 392-523 (ELQQLVVHSD…QQNKQEFGSV (132 aa)) are regulatory domain.

This sequence belongs to the alpha-IPM synthase/homocitrate synthase family. LeuA type 1 subfamily. As to quaternary structure, homodimer. Mn(2+) serves as cofactor.

The protein resides in the cytoplasm. It carries out the reaction 3-methyl-2-oxobutanoate + acetyl-CoA + H2O = (2S)-2-isopropylmalate + CoA + H(+). Its pathway is amino-acid biosynthesis; L-leucine biosynthesis; L-leucine from 3-methyl-2-oxobutanoate: step 1/4. In terms of biological role, catalyzes the condensation of the acetyl group of acetyl-CoA with 3-methyl-2-oxobutanoate (2-ketoisovalerate) to form 3-carboxy-3-hydroxy-4-methylpentanoate (2-isopropylmalate). In Shewanella halifaxensis (strain HAW-EB4), this protein is 2-isopropylmalate synthase.